A 148-amino-acid polypeptide reads, in one-letter code: MKVIFLKDVKGKGKKGETKNVADGYANNFLIKNGYAVEASNAALSTLSAQKKKEDKLAAEELAEAKALKEKMEKLTVELKAKSGEGGRLFGSITSKQIAQTLEKTHGIKIDKRKMDLPEAIRALGHTKVPVKLHHEVTATLDVHVSEE.

Belongs to the bacterial ribosomal protein bL9 family.

Binds to the 23S rRNA. In Listeria welshimeri serovar 6b (strain ATCC 35897 / DSM 20650 / CCUG 15529 / CIP 8149 / NCTC 11857 / SLCC 5334 / V8), this protein is Large ribosomal subunit protein bL9.